We begin with the raw amino-acid sequence, 215 residues long: Osmoprotectant import permease protein OsmW (215 aa).

One can recognise an ABC transmembrane type-1 domain in the interval 18–202 (TFQHLWLVAL…LLAIVLDWLL (185 aa)). Helical transmembrane passes span 24–44 (LVAL…VLIV), 51–73 (TPVL…GLMI), 78–100 (LIGH…LLPI), 132–152 (WVEI…AVVM), 153–173 (NIGV…LLLL), and 183–203 (MLIA…WLLH).

The protein belongs to the binding-protein-dependent transport system permease family. In terms of assembly, the complex is composed of two ATP-binding proteins (OsmV), two transmembrane proteins (OsmW and OsmY) and a solute-binding protein (OsmX).

The protein localises to the cell inner membrane. Functionally, part of the OsmU ABC transporter complex, which is involved in the uptake of osmoprotectants such as choline-O-sulfate and glycine betaine. Probably responsible for the translocation of the substrate across the membrane. This Salmonella typhimurium (strain LT2 / SGSC1412 / ATCC 700720) protein is Osmoprotectant import permease protein OsmW (osmW).